Reading from the N-terminus, the 73-residue chain is Sodium channel neurotoxin MeuNaTxalpha-13 (73 aa).

The signal sequence occupies residues 1-5; the sequence is TGVES. The 65-residue stretch at 7-71 folds into the LCN-type CS-alpha/beta domain; the sequence is RDAYIAKPHN…VPIRIPGKCH (65 aa). Disulfide bonds link Cys-17/Cys-70, Cys-21/Cys-43, Cys-29/Cys-53, and Cys-33/Cys-55. The propeptide at 72–73 is removed by a carboxypeptidase; the sequence is RR.

This sequence belongs to the long (4 C-C) scorpion toxin superfamily. Sodium channel inhibitor family. Alpha subfamily. As to expression, expressed by the venom gland.

The protein localises to the secreted. Alpha toxins bind voltage-independently at site-3 of sodium channels (Nav) and inhibit the inactivation of the activated channels, thereby blocking neuronal transmission. This chain is Sodium channel neurotoxin MeuNaTxalpha-13, found in Mesobuthus eupeus (Lesser Asian scorpion).